The primary structure comprises 45 residues: Large ribosomal subunit protein bL34 (45 aa).

Over residues 1–10 (MTKRTLEGTN) the composition is skewed to basic and acidic residues. The tract at residues 1 to 27 (MTKRTLEGTNRKRKRTSGFRARMRSAT) is disordered. Residues 11–23 (RKRKRTSGFRARM) are compositionally biased toward basic residues.

The protein belongs to the bacterial ribosomal protein bL34 family.

The protein is Large ribosomal subunit protein bL34 of Synechococcus elongatus (strain ATCC 33912 / PCC 7942 / FACHB-805) (Anacystis nidulans R2).